Here is a 258-residue protein sequence, read N- to C-terminus: Deoxyribose-phosphate aldolase (258 aa).

Asp102 (proton donor/acceptor) is an active-site residue. Lys165 (schiff-base intermediate with acetaldehyde) is an active-site residue. Lys199 (proton donor/acceptor) is an active-site residue.

This sequence belongs to the DeoC/FbaB aldolase family. DeoC type 2 subfamily.

The protein localises to the cytoplasm. It catalyses the reaction 2-deoxy-D-ribose 5-phosphate = D-glyceraldehyde 3-phosphate + acetaldehyde. It functions in the pathway carbohydrate degradation; 2-deoxy-D-ribose 1-phosphate degradation; D-glyceraldehyde 3-phosphate and acetaldehyde from 2-deoxy-alpha-D-ribose 1-phosphate: step 2/2. Catalyzes a reversible aldol reaction between acetaldehyde and D-glyceraldehyde 3-phosphate to generate 2-deoxy-D-ribose 5-phosphate. The polypeptide is Deoxyribose-phosphate aldolase (Vibrio campbellii (strain ATCC BAA-1116)).